Here is a 120-residue protein sequence, read N- to C-terminus: Large ribosomal subunit protein uL18 (120 aa).

Belongs to the universal ribosomal protein uL18 family. In terms of assembly, part of the 50S ribosomal subunit; part of the 5S rRNA/L5/L18/L25 subcomplex. Contacts the 5S and 23S rRNAs.

This is one of the proteins that bind and probably mediate the attachment of the 5S RNA into the large ribosomal subunit, where it forms part of the central protuberance. This chain is Large ribosomal subunit protein uL18, found in Trichodesmium erythraeum (strain IMS101).